Reading from the N-terminus, the 372-residue chain is MNGSGSQGAENTSQEGGSGGWQPEAVLVPLFFALIFLVGTVGNALVLAVLLRGGQAVSTTNLFILNLGVADLCFILCCVPFQATIYTLDDWVFGSLLCKAVHFLIFLTMHASSFTLAAVSLDRYLAIRYPLHSRELRTPRNALAAIGLIWGLALLFSGPYLSYYRQSQLANLTVCHPAWSAPRRRAMDLCTFVFSYLLPVLVLSLTYARTLRYLWRTVDPVTAGSGSQRAKRKVTRMIIIVAVLFCLCWMPHHALILCVWFGRFPLTRATYALRILSHLVSYANSCVNPIVYALVSKHFRKGFRKICAGLLRPAPRRASGRVSILAPGNHSGSMLEQESTDLTQVSEAAGPLVPPPALPNCTASSRTLDPAC.

Topologically, residues Met1–Val28 are extracellular. N-linked (GlcNAc...) asparagine glycans are attached at residues Asn2 and Asn11. Residues Pro29 to Val49 traverse the membrane as a helical segment. Topologically, residues Leu50–Thr60 are cytoplasmic. A helical membrane pass occupies residues Asn61–Phe81. Topologically, residues Gln82–Lys99 are extracellular. A disulfide bridge connects residues Cys98 and Cys175. Residues Ala100 to Leu121 form a helical membrane-spanning segment. The Cytoplasmic portion of the chain corresponds to Asp122 to Asn141. Residues Ala142–Ser162 traverse the membrane as a helical segment. The Extracellular segment spans residues Tyr163 to Met187. A helical membrane pass occupies residues Asp188–Ala208. Topologically, residues Arg209–Met237 are cytoplasmic. The chain crosses the membrane as a helical span at residues Ile238–Cys258. Residues Val259–Trp260 are Extracellular-facing. A helical membrane pass occupies residues Phe261–Ser281. The Cytoplasmic portion of the chain corresponds to Tyr282 to Cys372. Residues Val353–Cys372 form a disordered region. Residues Cys361–Cys372 are compositionally biased toward polar residues.

This sequence belongs to the G-protein coupled receptor 1 family.

It localises to the cell membrane. Functionally, receptor for the hormone galanin, GALP and spexin-1. The activity of this receptor is mediated by G proteins that activate the phospholipase C/protein kinase C pathway (via G(q)) and that inhibit adenylyl cyclase (via G(i)). This is Galanin receptor type 2 (Galr2) from Rattus norvegicus (Rat).